The primary structure comprises 327 residues: Glycerol-3-phosphate dehydrogenase [NAD(P)+] (327 aa).

NADPH is bound by residues W13, H33, and K102. The sn-glycerol 3-phosphate site is built by K102, G130, and S132. A134 provides a ligand contact to NADPH. Sn-glycerol 3-phosphate contacts are provided by K185, D238, S248, R249, and N250. K185 serves as the catalytic Proton acceptor. R249 serves as a coordination point for NADPH. NADPH is bound at residue E275.

It belongs to the NAD-dependent glycerol-3-phosphate dehydrogenase family.

The protein resides in the cytoplasm. The enzyme catalyses sn-glycerol 3-phosphate + NAD(+) = dihydroxyacetone phosphate + NADH + H(+). It carries out the reaction sn-glycerol 3-phosphate + NADP(+) = dihydroxyacetone phosphate + NADPH + H(+). The protein operates within membrane lipid metabolism; glycerophospholipid metabolism. Catalyzes the reduction of the glycolytic intermediate dihydroxyacetone phosphate (DHAP) to sn-glycerol 3-phosphate (G3P), the key precursor for phospholipid synthesis. The sequence is that of Glycerol-3-phosphate dehydrogenase [NAD(P)+] from Vesicomyosocius okutanii subsp. Calyptogena okutanii (strain HA).